The sequence spans 65 residues: Metallothionein-like protein 3B (65 aa).

Belongs to the metallothionein superfamily. Type 15 family. Expressed in leaves and rachis.

Metallothioneins have a high content of cysteine residues that bind various heavy metals. The polypeptide is Metallothionein-like protein 3B (MT3B) (Oryza sativa subsp. japonica (Rice)).